The following is a 202-amino-acid chain: Holliday junction branch migration complex subunit RuvA (202 aa).

Residues 1-65 (MIAYVEGRLA…EDALELYGFA (65 aa)) are domain I. The interval 66 to 144 (TWDERQTFIV…VEDLPAAAPL (79 aa)) is domain II. The segment at 145–155 (VTGGAPGGVFR) is flexible linker. The segment at 155–202 (RDALAGLANLGYGEEEASHVLKEVLHGEPDLDVGGALRAALRALARGR) is domain III.

The protein belongs to the RuvA family. As to quaternary structure, homotetramer. Forms an RuvA(8)-RuvB(12)-Holliday junction (HJ) complex. HJ DNA is sandwiched between 2 RuvA tetramers; dsDNA enters through RuvA and exits via RuvB. An RuvB hexamer assembles on each DNA strand where it exits the tetramer. Each RuvB hexamer is contacted by two RuvA subunits (via domain III) on 2 adjacent RuvB subunits; this complex drives branch migration. In the full resolvosome a probable DNA-RuvA(4)-RuvB(12)-RuvC(2) complex forms which resolves the HJ.

It is found in the cytoplasm. Its function is as follows. The RuvA-RuvB-RuvC complex processes Holliday junction (HJ) DNA during genetic recombination and DNA repair, while the RuvA-RuvB complex plays an important role in the rescue of blocked DNA replication forks via replication fork reversal (RFR). RuvA specifically binds to HJ cruciform DNA, conferring on it an open structure. The RuvB hexamer acts as an ATP-dependent pump, pulling dsDNA into and through the RuvAB complex. HJ branch migration allows RuvC to scan DNA until it finds its consensus sequence, where it cleaves and resolves the cruciform DNA. The polypeptide is Holliday junction branch migration complex subunit RuvA (Nitratidesulfovibrio vulgaris (strain DP4) (Desulfovibrio vulgaris)).